The following is a 152-amino-acid chain: MGIFTKKNNVIAYTDGACKGNPGIGGWGAILSYNGVDKEISGAEKDTTNNRMELMAAIKTLQALKRKCDITIYTDSKYLQNGINQWLANWKANGWKTAAKKEVKNKDLWQELDSLTTKHNVTWSWVKGHSGNQGNEKADELANKAIAELTGK.

The RNase H type-1 domain occupies 6 to 147; sequence KKNNVIAYTD…ADELANKAIA (142 aa). Mg(2+) contacts are provided by Asp-15, Glu-53, Asp-75, and Asp-139.

Belongs to the RNase H family. Monomer. Mg(2+) is required as a cofactor.

The protein resides in the cytoplasm. It carries out the reaction Endonucleolytic cleavage to 5'-phosphomonoester.. In terms of biological role, endonuclease that specifically degrades the RNA of RNA-DNA hybrids. This chain is Ribonuclease H, found in Francisella philomiragia subsp. philomiragia (strain ATCC 25017 / CCUG 19701 / FSC 153 / O#319-036).